Here is a 675-residue protein sequence, read N- to C-terminus: DNA ligase (675 aa).

NAD(+)-binding positions include 36–40 (DAVYD), 85–86 (SL), and E118. K120 functions as the N6-AMP-lysine intermediate in the catalytic mechanism. NAD(+)-binding residues include R141, E178, K298, and K322. Positions 416, 419, 434, and 439 each coordinate Zn(2+). The region spanning 598-675 (TQPQTLSGKT…SEADLLALLQ (78 aa)) is the BRCT domain.

This sequence belongs to the NAD-dependent DNA ligase family. LigA subfamily. Requires Mg(2+) as cofactor. Mn(2+) serves as cofactor.

It carries out the reaction NAD(+) + (deoxyribonucleotide)n-3'-hydroxyl + 5'-phospho-(deoxyribonucleotide)m = (deoxyribonucleotide)n+m + AMP + beta-nicotinamide D-nucleotide.. In terms of biological role, DNA ligase that catalyzes the formation of phosphodiester linkages between 5'-phosphoryl and 3'-hydroxyl groups in double-stranded DNA using NAD as a coenzyme and as the energy source for the reaction. It is essential for DNA replication and repair of damaged DNA. The protein is DNA ligase of Acaryochloris marina (strain MBIC 11017).